Reading from the N-terminus, the 295-residue chain is Acetylglutamate kinase (295 aa).

Substrate contacts are provided by residues 66-67 (GG), Arg88, and Asn193.

Belongs to the acetylglutamate kinase family. ArgB subfamily.

It localises to the cytoplasm. The catalysed reaction is N-acetyl-L-glutamate + ATP = N-acetyl-L-glutamyl 5-phosphate + ADP. It participates in amino-acid biosynthesis; L-arginine biosynthesis; N(2)-acetyl-L-ornithine from L-glutamate: step 2/4. Functionally, catalyzes the ATP-dependent phosphorylation of N-acetyl-L-glutamate. The polypeptide is Acetylglutamate kinase (Rhizobium etli (strain ATCC 51251 / DSM 11541 / JCM 21823 / NBRC 15573 / CFN 42)).